The primary structure comprises 99 residues: DNA-binding protein HU (99 aa).

Belongs to the bacterial histone-like protein family. Homodimer.

Its function is as follows. Histone-like DNA-binding protein which is capable of wrapping DNA to stabilize it, and thus to prevent its denaturation under extreme environmental conditions. This is DNA-binding protein HU (hup) from Rickettsia typhi (strain ATCC VR-144 / Wilmington).